A 116-amino-acid polypeptide reads, in one-letter code: Beta-2-microglobulin (116 aa).

An N-terminal signal peptide occupies residues 1–19 (MKFLLSFVVLAVFSASAFA). The 88-residue stretch at 24 to 111 (PKIQVYSRNP…RHLKETKNIS (88 aa)) folds into the Ig-like C1-type domain. An intrachain disulfide couples C44 to C99.

The protein belongs to the beta-2-microglobulin family. In terms of assembly, heterodimer of an alpha chain and a beta chain. Beta-2-microglobulin is the beta-chain of major histocompatibility complex class I molecules.

The protein localises to the secreted. In terms of biological role, component of the class I major histocompatibility complex (MHC). Involved in the presentation of peptide antigens to the immune system. The polypeptide is Beta-2-microglobulin (b2m) (Ictalurus punctatus (Channel catfish)).